We begin with the raw amino-acid sequence, 101 residues long: Urease subunit beta (101 aa).

It belongs to the urease beta subunit family. As to quaternary structure, heterotrimer of UreA (gamma), UreB (beta) and UreC (alpha) subunits. Three heterotrimers associate to form the active enzyme.

It is found in the cytoplasm. It carries out the reaction urea + 2 H2O + H(+) = hydrogencarbonate + 2 NH4(+). It functions in the pathway nitrogen metabolism; urea degradation; CO(2) and NH(3) from urea (urease route): step 1/1. This chain is Urease subunit beta, found in Verminephrobacter eiseniae (strain EF01-2).